We begin with the raw amino-acid sequence, 409 residues long: uncharacterized protein (409 aa).

The region spanning 5 to 274 is the OBG-type G domain; the sequence is ILIGFVGKPS…LAKQGFVKYE (270 aa). GTP contacts are provided by residues 11–18 and 83–87; these read GKPSSGKS and DVAGL.

It belongs to the TRAFAC class OBG-HflX-like GTPase superfamily. OBG GTPase family.

The protein localises to the cytoplasm. It is found in the nucleus. This is an uncharacterized protein from Schizosaccharomyces pombe (strain 972 / ATCC 24843) (Fission yeast).